Reading from the N-terminus, the 57-residue chain is Large ribosomal subunit protein bL32c (57 aa).

Belongs to the bacterial ribosomal protein bL32 family.

The protein localises to the plastid. It localises to the chloroplast. This is Large ribosomal subunit protein bL32c from Liriodendron tulipifera (Tuliptree).